We begin with the raw amino-acid sequence, 351 residues long: Uroporphyrinogen decarboxylase (351 aa).

Residues 32 to 36, Phe-51, Asp-82, Tyr-157, Ser-211, and His-326 each bind substrate; that span reads RQAGR.

Belongs to the uroporphyrinogen decarboxylase family. In terms of assembly, homodimer.

Its subcellular location is the cytoplasm. The enzyme catalyses uroporphyrinogen III + 4 H(+) = coproporphyrinogen III + 4 CO2. Its pathway is porphyrin-containing compound metabolism; protoporphyrin-IX biosynthesis; coproporphyrinogen-III from 5-aminolevulinate: step 4/4. Functionally, catalyzes the decarboxylation of four acetate groups of uroporphyrinogen III to yield coproporphyrinogen III. This is Uroporphyrinogen decarboxylase from Caulobacter vibrioides (strain ATCC 19089 / CIP 103742 / CB 15) (Caulobacter crescentus).